A 301-amino-acid polypeptide reads, in one-letter code: F-actin-capping protein subunit beta (301 aa).

Phosphoserine is present on S31. An N6-acetyllysine modification is found at K264.

The protein belongs to the F-actin-capping protein beta subunit family. As to quaternary structure, component of the F-actin capping complex, composed of a heterodimer of an alpha and a beta subunit. Subunit of dynactin, a multiprotein complex part of a tripartite complex with dynein and a adapter, such as BICDL1, BICD2 or HOOK3. The dynactin complex is built around ACTR1A/ACTB filament and consists of an actin-related filament composed of a shoulder domain, a pointed end and a barbed end. Its length is defined by its flexible shoulder domain. The soulder is composed of 2 DCTN1 subunits, 4 DCTN2 and 2 DCTN3. The 4 DCNT2 (via N-terminus) bind the ACTR1A filament and act as molecular rulers to determine the length. The pointed end is important for binding dynein-dynactin cargo adapters. Consists of 4 subunits: ACTR10, DCNT4, DCTN5 and DCTN6. The barbed end is composed of a CAPZA1:CAPZB heterodimers, which binds ACTR1A/ACTB filament and dynactin and stabilizes dynactin. Interacts with ARHGAP17. Interaction with RCSD1/CAPZIP. Component of the WASH complex, composed of F-actin-capping protein subunit alpha (CAPZA1, CAPZA2 or CAPZA3), F-actin-capping protein subunit beta (CAPZB), WASH (WASHC1, WASH2P, WASH3P, WASH4P, WASH5P or WASH6P), WASHC2 (WASHC2A or WASHC2C), WASHC3, WASHC4 and WASHC5. Interacts with ACTG1. Directly interacts with CRACD; this interaction decreases binding to actin. In terms of tissue distribution, the isoform beta-3 is predominantly expressed in the testis. It is only detected in total sperm, sperm heads and the calyx fraction, but not in sperm tails or any supernatant fraction. Weaker expression also found in brain.

It is found in the cytoplasm. It localises to the cytoskeleton. The protein resides in the perinuclear theca. Its subcellular location is the calyx. Its function is as follows. F-actin-capping proteins bind in a Ca(2+)-independent manner to the fast growing ends of actin filaments (barbed end) thereby blocking the exchange of subunits at these ends. Unlike other capping proteins (such as gelsolin and severin), these proteins do not sever actin filaments. Plays a role in the regulation of cell morphology and cytoskeletal organization. Forms, with CAPZB, the barbed end of the fast growing ends of actin filaments in the dynactin complex and stabilizes dynactin structure. The dynactin multiprotein complex activates the molecular motor dynein for ultra-processive transport along microtubules. This chain is F-actin-capping protein subunit beta (CAPZB), found in Bos taurus (Bovine).